A 586-amino-acid chain; its full sequence is Probable riboflavin import ATP-binding protein RfuB (586 aa).

2 consecutive ABC transporter domains span residues 46 to 299 (RAVD…NECI) and 343 to 586 (LRVE…DSHT). 89–96 (GKNGAGKS) contacts ATP.

Belongs to the ABC transporter superfamily. As to quaternary structure, the complex is probably composed of two ATP-binding proteins (RfuB), two transmembrane proteins (RfuC and RfuD) and a solute-binding protein (RfuA).

It localises to the cell inner membrane. In terms of biological role, probably part of the ABC transporter complex RfuABCD involved in riboflavin import. Probably responsible for energy coupling to the transport system. The sequence is that of Probable riboflavin import ATP-binding protein RfuB from Treponema pallidum (strain Nichols).